The primary structure comprises 127 residues: Large ribosomal subunit protein bL21 (127 aa).

Belongs to the bacterial ribosomal protein bL21 family. Part of the 50S ribosomal subunit. Contacts protein L20.

In terms of biological role, this protein binds to 23S rRNA in the presence of protein L20. The sequence is that of Large ribosomal subunit protein bL21 from Synechococcus sp. (strain ATCC 27144 / PCC 6301 / SAUG 1402/1) (Anacystis nidulans).